The following is a 222-amino-acid chain: 25 kDa elongation factor 1-beta (222 aa).

Low complexity predominate over residues 75-94 (TSASAPAKQAPKKAASAPAK). The tract at residues 75 to 98 (TSASAPAKQAPKKAASAPAKQADE) is disordered.

It belongs to the EF-1-beta/EF-1-delta family. In terms of assembly, EF-1 is composed of 4 subunits: alpha, beta, delta, and gamma.

EF-1-beta and EF-1-delta stimulate the exchange of GDP bound to EF-1-alpha to GTP. The polypeptide is 25 kDa elongation factor 1-beta (Trypanosoma cruzi).